A 205-amino-acid polypeptide reads, in one-letter code: Ribosomal RNA small subunit methyltransferase G (205 aa).

Residues glycine 66, phenylalanine 71, 119 to 120 (IE), and arginine 135 contribute to the S-adenosyl-L-methionine site.

The protein belongs to the methyltransferase superfamily. RNA methyltransferase RsmG family.

It is found in the cytoplasm. The catalysed reaction is guanosine(527) in 16S rRNA + S-adenosyl-L-methionine = N(7)-methylguanosine(527) in 16S rRNA + S-adenosyl-L-homocysteine. Functionally, specifically methylates the N7 position of guanine in position 527 of 16S rRNA. The sequence is that of Ribosomal RNA small subunit methyltransferase G from Rhizobium etli (strain CIAT 652).